The following is a 479-amino-acid chain: Something about silencing protein 10 (479 aa).

A compositionally biased stretch (basic residues) spans 1–10; that stretch reads MVGRSRRRGA. Disordered regions lie at residues 1 to 45 and 62 to 166; these read MVGR…SYYQ and KGWN…EEAQ. Arg8 carries the omega-N-methylarginine modification. Positions 11 to 21 are enriched in low complexity; sequence AKWAAVRAKAG. A Phosphoserine modification is found at Ser37. Residues 69–111 show a composition bias toward acidic residues; it reads SGDEEDGEEEEEEVLALDMDDEDDEDGGNAGEEEEEENADDDG. Lys144 carries the post-translational modification N6-acetyllysine; alternate. Residue Lys144 forms a Glycyl lysine isopeptide (Lys-Gly) (interchain with G-Cter in SUMO2); alternate linkage. Ser150 bears the Phosphoserine mark. Positions 153–165 are enriched in acidic residues; that stretch reads EAEEEEREEEEEA. A Phosphothreonine modification is found at Thr362. 2 positions are modified to phosphoserine: Ser365 and Ser368. At Arg385 the chain carries Citrulline. The segment at 419–466 is disordered; sequence RGLTPRRKKIDRNPRVKHREKFRRAKIRRRGQVREVRKEEQRYSGELS. The segment covering 422–449 has biased composition (basic residues); it reads TPRRKKIDRNPRVKHREKFRRAKIRRRG. A compositionally biased stretch (basic and acidic residues) spans 450–461; sequence QVREVRKEEQRY.

Belongs to the SAS10 family. Part of the small subunit (SSU) processome, composed of more than 70 proteins and the RNA chaperone small nucleolar RNA (snoRNA) U3. In terms of processing, citrullinated by PADI4.

The protein resides in the nucleus. It localises to the nucleolus. Functionally, essential for gene silencing: has a role in the structure of silenced chromatin. Plays a role in the developing brain. Part of the small subunit (SSU) processome, first precursor of the small eukaryotic ribosomal subunit. During the assembly of the SSU processome in the nucleolus, many ribosome biogenesis factors, an RNA chaperone and ribosomal proteins associate with the nascent pre-rRNA and work in concert to generate RNA folding, modifications, rearrangements and cleavage as well as targeted degradation of pre-ribosomal RNA by the RNA exosome. The protein is Something about silencing protein 10 of Homo sapiens (Human).